We begin with the raw amino-acid sequence, 205 residues long: uncharacterized protein (205 aa).

The 61-residue stretch at 11-71 (DKRQAEILEA…RIIETGLDEG (61 aa)) folds into the HTH tetR-type domain. Positions 34–53 (TMKDVVEESGFSRGGVYLYF) form a DNA-binding region, H-T-H motif.

This is an uncharacterized protein from Bacillus subtilis (strain 168).